Consider the following 754-residue polypeptide: Endothelin-converting enzyme 1 (754 aa).

At 1 to 52 (MMSTYKRATLDEEDLVDSLSESDVYPNHLQVNFRGPRNGQRCWAARTPVEKR) the chain is on the cytoplasmic side. Threonine 9 bears the Phosphothreonine mark. The helical; Signal-anchor for type II membrane protein transmembrane segment at 53-73 (LVVLVALLAAALVACLAVLGI) threads the bilayer. Residues 74–754 (QYQTRTPSVC…MNPHHKCEVW (681 aa)) lie on the Extracellular side of the membrane. The Peptidase M13 domain occupies 82–754 (VCLSEACISV…MNPHHKCEVW (673 aa)). 5 cysteine pairs are disulfide-bonded: cysteine 83–cysteine 88, cysteine 106–cysteine 739, cysteine 114–cysteine 699, cysteine 169–cysteine 419, and cysteine 628–cysteine 751. Residues asparagine 150, asparagine 171, asparagine 194, asparagine 254, asparagine 300, asparagine 346, asparagine 367, and asparagine 523 are each glycosylated (N-linked (GlcNAc...) asparagine). Histidine 591 contacts Zn(2+). Glutamate 592 is a catalytic residue. Histidine 595 contributes to the Zn(2+) binding site. N-linked (GlcNAc...) asparagine glycans are attached at residues asparagine 616 and asparagine 635. Glutamate 651 serves as a coordination point for Zn(2+). The active-site Proton donor is aspartate 655.

It belongs to the peptidase M13 family. In terms of assembly, homodimer; disulfide-linked. Interacts with PPP1R16B. Interacts with TSPAN8; this interaction recruits the endothelin converting enzyme ECE1 to tetraspanin-enriched microdomains and positively modulates its enzymatic activity. It depends on Zn(2+) as a cofactor.

The protein resides in the cell membrane. It catalyses the reaction Hydrolysis of the 21-Trp-|-Val-22 bond in big endothelin to form endothelin 1.. Its activity is regulated as follows. Inhibited by phosphoramidon. Its function is as follows. Converts big endothelin-1 to endothelin-1. The polypeptide is Endothelin-converting enzyme 1 (ECE1) (Bos taurus (Bovine)).